Reading from the N-terminus, the 188-residue chain is Ribosomal RNA small subunit methyltransferase G (188 aa).

Residues glycine 69, phenylalanine 74, 119–120 (VQ), and arginine 134 contribute to the S-adenosyl-L-methionine site.

Belongs to the methyltransferase superfamily. RNA methyltransferase RsmG family.

The protein resides in the cytoplasm. It carries out the reaction guanosine(527) in 16S rRNA + S-adenosyl-L-methionine = N(7)-methylguanosine(527) in 16S rRNA + S-adenosyl-L-homocysteine. Its function is as follows. Specifically methylates the N7 position of guanine in position 527 of 16S rRNA. This Campylobacter jejuni subsp. doylei (strain ATCC BAA-1458 / RM4099 / 269.97) protein is Ribosomal RNA small subunit methyltransferase G.